The sequence spans 197 residues: MFLYVAVGSLVVARLLLYPLRPADLTPPYWVAMGATAITVLAGAHIVEMADAPMAIVTSGLVAGASVVFWAFGPWLIPPLVAASIWKHVVHRVPLRYEATLWSVVFPLGMYGVGAYRLGLAAHLPIVESIGEFEGWVALAVWTITFVAMLHHLAATIGRSGRSSHAIGAADDTHAIICRPPRSFDHQVRAFRRNQPM.

Helical transmembrane passes span 30–50, 61–81, 101–121, and 130–150; these read WVAMGATAITVLAGAHIVEMA, LVAGASVVFWAFGPWLIPPLV, LWSVVFPLGMYGVGAYRLGLA, and IGEFEGWVALAVWTITFVAML.

It localises to the cell membrane. This is an uncharacterized protein from Mycobacterium tuberculosis (strain CDC 1551 / Oshkosh).